Here is a 587-residue protein sequence, read N- to C-terminus: Protein IQ-DOMAIN 31 (587 aa).

The tract at residues 57 to 80 (ETNTVDRSGGMLETQNVGPEEISD) is disordered. Ser-79 bears the Phosphoserine mark. 3 IQ domains span residues 112 to 140 (REIAATSVQAAFRGYLARRAFWALKGIIR), 141 to 163 (LQALIRGHLVRRQAVATLFSVMG), and 164 to 188 (IVRLQAFARGREIRKSDIGVQVYRK). Residues 149–159 (LVRRQAVATLF) are calmodulin-binding. The Nuclear localization signal motif lies at 176 to 183 (IRKSDIGV). Positions 344–587 (NPVVESSIQP…AKTTPAERKR (244 aa)) are disordered. Composition is skewed to basic and acidic residues over residues 357–373 (PRKEVEKPKLGVEKTRE) and 390–413 (CDEKKKQEISEQPEEEVHALEMEV). Residues 424 to 434 (ALDSSLVNQID) are compositionally biased toward polar residues. 2 stretches are compositionally biased toward basic and acidic residues: residues 435 to 472 (SNEKAMVEEKPSMEKDTKEEKTPKPNNKENSAGKENQK) and 482 to 494 (KTEREESNGHHET). Polar residues-rich tracts occupy residues 495-506 (SPSIPSYMQATK) and 544-561 (RITSHSPRTTRLANSGDK).

Belongs to the IQD family. In terms of assembly, binds to multiple calmodulin (CaM) in the presence of Ca(2+) and CaM-like proteins.

It localises to the nucleus. It is found in the nucleus envelope. The protein localises to the cytoplasm. The protein resides in the cytoskeleton. Its subcellular location is the cell membrane. Functionally, may be involved in cooperative interactions with calmodulins or calmodulin-like proteins. Recruits calmodulin proteins to microtubules, thus being a potential scaffold in cellular signaling and trafficking. May associate with nucleic acids and regulate gene expression at the transcriptional or post-transcriptional level. This Arabidopsis thaliana (Mouse-ear cress) protein is Protein IQ-DOMAIN 31.